The chain runs to 114 residues: Large ribosomal subunit protein bL19 (114 aa).

It belongs to the bacterial ribosomal protein bL19 family.

Its function is as follows. This protein is located at the 30S-50S ribosomal subunit interface and may play a role in the structure and function of the aminoacyl-tRNA binding site. This chain is Large ribosomal subunit protein bL19, found in Desulfatibacillum aliphaticivorans.